The chain runs to 458 residues: O-acyltransferase WSD (458 aa).

The Proton acceptor role is filled by H133.

Belongs to the long-chain O-acyltransferase family.

The catalysed reaction is a long chain fatty alcohol + a fatty acyl-CoA = a wax ester + CoA. It catalyses the reaction an acyl-CoA + a 1,2-diacyl-sn-glycerol = a triacyl-sn-glycerol + CoA. It functions in the pathway glycerolipid metabolism; triacylglycerol biosynthesis. In terms of biological role, bifunctional wax ester synthase/diacylglycerol acyltransferase (WS and DGAT). Catalyzes the terminal and only committed step in triacylglycerol synthesis by using diacylglycerol and fatty acyl CoA as substrates. Required for storage lipid synthesis. WS uses C(12)-CoA to C(18)-CoA substrates whereas DGAT prefers C(20)-CoA. Upon expression in E.coli and Pseudomonas citronellolis (DSM 50332) both WS and DGAT activities increase. This chain is O-acyltransferase WSD (wax-dgaT), found in Acinetobacter baylyi (strain ATCC 33305 / BD413 / ADP1).